The chain runs to 256 residues: 6-carboxyhexanoate--CoA ligase (256 aa).

It belongs to the BioW family. As to quaternary structure, homodimer. The cofactor is Mg(2+).

The catalysed reaction is heptanedioate + ATP + CoA = 6-carboxyhexanoyl-CoA + AMP + diphosphate. It participates in metabolic intermediate metabolism; pimeloyl-CoA biosynthesis; pimeloyl-CoA from pimelate: step 1/1. Catalyzes the transformation of pimelate into pimeloyl-CoA with concomitant hydrolysis of ATP to AMP. The chain is 6-carboxyhexanoate--CoA ligase from Bacillus velezensis (strain DSM 23117 / BGSC 10A6 / LMG 26770 / FZB42) (Bacillus amyloliquefaciens subsp. plantarum).